A 109-amino-acid polypeptide reads, in one-letter code: Small ribosomal subunit protein uS10 (109 aa).

The protein belongs to the universal ribosomal protein uS10 family. In terms of assembly, part of the 30S ribosomal subunit.

In terms of biological role, involved in the binding of tRNA to the ribosomes. In Wolbachia pipientis wMel, this protein is Small ribosomal subunit protein uS10.